We begin with the raw amino-acid sequence, 60 residues long: Large ribosomal subunit protein bL32 (60 aa).

The protein belongs to the bacterial ribosomal protein bL32 family.

The polypeptide is Large ribosomal subunit protein bL32 (Clostridium acetobutylicum (strain ATCC 824 / DSM 792 / JCM 1419 / IAM 19013 / LMG 5710 / NBRC 13948 / NRRL B-527 / VKM B-1787 / 2291 / W)).